We begin with the raw amino-acid sequence, 669 residues long: Very long-chain fatty acid transport protein (669 aa).

Residues 1–5 are Cytoplasmic-facing; it reads MSPIQ. A helical transmembrane segment spans residues 6–26; the sequence is VVVFALSRIFLLLFRLIKLII. Residues 27 to 148 are Extracellular-facing; sequence TPIQKSLGYL…YVAIDCTNKP (122 aa). The helical transmembrane segment at 149–169 threads the bilayer; the sequence is LFVFLWLSLWNIGAIPAFLNY. The Cytoplasmic portion of the chain corresponds to 170–270; the sequence is NTKGTPLVHS…TGLPKSAIMS (101 aa). Residue 256-267 coordinates ATP; the sequence is YTSGTTGLPKSA. The stretch at 271 to 339 is an intramembrane region; sequence WRKSSVGCQV…FWKQVYLTGA (69 aa). At 340-669 the chain is on the cytoplasmic side; the sequence is THIQYVGEVC…EAIDAQTIKL (330 aa). Residues 501–551 carry the FACS motif; the sequence is DAWYRCGDLLKADEYGLWYFLDRMGDTFRWKSENVSTTEVEDQLTASNKEQ. The C-terminal peroxisome targeting signal (PTS1) motif lies at 667–669; sequence IKL.

It belongs to the ATP-dependent AMP-binding enzyme family. Interacts with fatty acyl-CoA synthetases FAA1 and FAA4.

It localises to the lipid droplet. It is found in the cell membrane. Its subcellular location is the peroxisome membrane. The protein resides in the peroxisome. The catalysed reaction is a very long-chain fatty acid + ATP + CoA = a very long-chain fatty acyl-CoA + AMP + diphosphate. It carries out the reaction tetracosanoate + ATP + CoA = tetracosanoyl-CoA + AMP + diphosphate. Functionally, acyl-CoA synthetase required for both the import of long chain fatty acids (LCFAs) (C14-C18) and the activation very long chain fatty acids (VLCFAs) (C20-C26) by esterification of the fatty acids into metabolically active CoA-thioesters for subsequent degradation or incorporation into phospholipids. The transport and fatty acyl-CoA synthetase activities are genetically separable and are thus independent activities. Esterifies VLCFAs in the peroxisome matrix. The VLCFAs are actively transported into peroxisomes by a PXA1-PXA2 heterodimeric transporter in the peroxisomal membrane. This is Very long-chain fatty acid transport protein (FAT1) from Saccharomyces cerevisiae (strain ATCC 204508 / S288c) (Baker's yeast).